Reading from the N-terminus, the 141-residue chain is ATP synthase epsilon chain (141 aa).

The protein belongs to the ATPase epsilon chain family. F-type ATPases have 2 components, CF(1) - the catalytic core - and CF(0) - the membrane proton channel. CF(1) has five subunits: alpha(3), beta(3), gamma(1), delta(1), epsilon(1). CF(0) has three main subunits: a, b and c.

Its subcellular location is the cell inner membrane. In terms of biological role, produces ATP from ADP in the presence of a proton gradient across the membrane. This chain is ATP synthase epsilon chain, found in Burkholderia cenocepacia (strain ATCC BAA-245 / DSM 16553 / LMG 16656 / NCTC 13227 / J2315 / CF5610) (Burkholderia cepacia (strain J2315)).